Reading from the N-terminus, the 274-residue chain is Protein TIC 20-I, chloroplastic (274 aa).

The transit peptide at 1–65 directs the protein to the chloroplast; sequence MITGYSTPSA…ELPRVSRGVP (65 aa). 4 consecutive transmembrane segments (helical) span residues 130–152, 167–187, 200–220, and 229–249; these read LPYLMPLHETWMYAETAYHLHPF, IGRLPSWFLMAYFFVAYLGIV, VVMGMLLEIALQVIGTVSKWM, and FGMHFWTAVAFAYLFTVLESI.

The protein belongs to the Tic20 family. As to quaternary structure, part of the Tic complex. Component of the 1-MD complex, composed of TIC20-I, TIC214, TIC100 and TIC56. Interacts with the translocating preproteins. Hydrolysis of ATP is essential for the formation of this complex. The 1-MD complex interacts with TIC21. Expressed in leaves, shoots and roots. High expression in mature photosynthetic tissues. Lower levels in non-photosynthetic tissues and roots.

It localises to the plastid. It is found in the chloroplast inner membrane. Involved in protein precursor import into chloroplasts. May be part of an intermediate translocation complex acting as a protein-conducting channel at the inner envelope. Seems to be specific for photosynthesis-related pre-proteins. Partially redundant with TIC20-IV, but not with TIC20-II or TIC20-V. This is Protein TIC 20-I, chloroplastic from Arabidopsis thaliana (Mouse-ear cress).